Here is a 213-residue protein sequence, read N- to C-terminus: 3-isopropylmalate dehydratase small subunit (213 aa).

Belongs to the LeuD family. LeuD type 1 subfamily. As to quaternary structure, heterodimer of LeuC and LeuD.

It carries out the reaction (2R,3S)-3-isopropylmalate = (2S)-2-isopropylmalate. It functions in the pathway amino-acid biosynthesis; L-leucine biosynthesis; L-leucine from 3-methyl-2-oxobutanoate: step 2/4. Its function is as follows. Catalyzes the isomerization between 2-isopropylmalate and 3-isopropylmalate, via the formation of 2-isopropylmaleate. The polypeptide is 3-isopropylmalate dehydratase small subunit (Pseudomonas savastanoi pv. phaseolicola (strain 1448A / Race 6) (Pseudomonas syringae pv. phaseolicola (strain 1448A / Race 6))).